Consider the following 289-residue polypeptide: Porin (289 aa).

Homotrimer.

The protein resides in the cell outer membrane. In terms of biological role, forms channels that allow the passive diffusion of small hydrophilic solutes up to an exclusion limit of about 0.6 kDa. The polypeptide is Porin (opmA) (Fuscovulum blasticum (Rhodobacter blasticus)).